The following is a 283-amino-acid chain: Shikimate kinase (283 aa).

ATP is bound at residue proline 86 to alanine 96.

This sequence belongs to the GHMP kinase family. Archaeal shikimate kinase subfamily.

It localises to the cytoplasm. It carries out the reaction shikimate + ATP = 3-phosphoshikimate + ADP + H(+). It participates in metabolic intermediate biosynthesis; chorismate biosynthesis; chorismate from D-erythrose 4-phosphate and phosphoenolpyruvate: step 5/7. This Methanococcus vannielii (strain ATCC 35089 / DSM 1224 / JCM 13029 / OCM 148 / SB) protein is Shikimate kinase.